Here is a 289-residue protein sequence, read N- to C-terminus: Leucine--tRNA ligase subunit beta (289 aa).

The 'KMSKS' region motif lies at 45 to 49 (KMSKS). Lysine 48 contacts ATP.

It belongs to the class-I aminoacyl-tRNA synthetase family. In terms of assembly, seems to consist of an alpha chain and a beta chain.

The protein resides in the cytoplasm. The enzyme catalyses tRNA(Leu) + L-leucine + ATP = L-leucyl-tRNA(Leu) + AMP + diphosphate. This Aquifex aeolicus (strain VF5) protein is Leucine--tRNA ligase subunit beta (leuS').